The following is a 55-amino-acid chain: UPF0391 membrane protein NE1120 (55 aa).

A run of 2 helical transmembrane segments spans residues 4–24 and 27–47; these read MALV…AGIA and LAWA…VFYL.

This sequence belongs to the UPF0391 family.

The protein localises to the cell membrane. This is UPF0391 membrane protein NE1120 from Nitrosomonas europaea (strain ATCC 19718 / CIP 103999 / KCTC 2705 / NBRC 14298).